Consider the following 857-residue polypeptide: ATP-dependent RNA helicase DDX24 (857 aa).

The segment at 61–179 (NPSRLFSSEE…SPKLPKKSKK (119 aa)) is disordered. A phosphoserine mark is found at Ser80 and Ser92. Over residues 152-161 (PRKKKNKGKK) the composition is skewed to basic residues. Phosphoserine is present on Ser170. Residues 193 to 221 (SAWRDLFVPKAVLRALSFLGFSAPTPIQA) carry the Q motif motif. Positions 225–528 (APAIRDKLDI…RILHKKHVKK (304 aa)) constitute a Helicase ATP-binding domain. Position 238-245 (238-245 (AETGSGKT)) interacts with ATP. Positions 279–363 (RFGATAHLGS…NEDGEEKFDA (85 aa)) are disordered. Phosphoserine occurs at positions 288 and 296. A compositionally biased stretch (basic and acidic residues) spans 290 to 307 (CKDRTESGVLPEEARIET). A compositionally biased stretch (polar residues) spans 309–330 (AQPSDSGVQATPETSASASAQT). Over residues 345–363 (LEEKPVPKQNEDGEEKFDA) the composition is skewed to basic and acidic residues. Lys370 participates in a covalent cross-link: Glycyl lysine isopeptide (Lys-Gly) (interchain with G-Cter in SUMO2). A DEAD box motif is present at residues 471–474 (DEAD). The Helicase C-terminal domain maps to 576-723 (DLYLYYFLMQ…LFPVQSKYMD (148 aa)). Lys624 is covalently cross-linked (Glycyl lysine isopeptide (Lys-Gly) (interchain with G-Cter in SUMO2)). The interval 808-857 (RYPTQSGRPPQPVLASRNIESALSCLSRQKRRRKKPKEPRAPPQPGSSTS) is disordered. The segment covering 825–834 (NIESALSCLS) has biased composition (polar residues). Basic residues predominate over residues 835–844 (RQKRRRKKPK). Over residues 848–857 (APPQPGSSTS) the composition is skewed to pro residues.

It belongs to the DEAD box helicase family. DDX24/MAK5 subfamily. Interacts with FADD. Interacts with RIPK1; this interaction disrupts RLR signaling activation of IFN-dependent transcription factor IRF7. Interacts with NIP7. Interacts with EP300; this interaction prevents TP53 acetylation mediated by EP300. Ubiquitinated by MDM2 without targeting DDX24 for proteasomal degradation. Instead, polyubiquitylated DDX24 promotes interaction with NIP7, a component of pre-rRNP processing complex, and associates with pre-rRNA molecules and pre-ribosomal particles.

The protein resides in the cytoplasm. Its subcellular location is the nucleus. The enzyme catalyses ATP + H2O = ADP + phosphate + H(+). Functionally, ATP-dependent RNA helicase that plays a role in various aspects of RNA metabolism including pre-mRNA splicing and is thereby involved in different biological processes such as cell cycle regulation or innate immunity. Plays an inhibitory role in TP53 transcriptional activity and subsequently in TP53 controlled cell growth arrest and senescence by inhibiting its EP300 mediated acetylation. Negatively regulates cytosolic RNA-mediated innate immune signaling at least in part by affecting RIPK1/IRF7 interactions. Alternatively, possesses antiviral activity by recognizing gammaherpesvirus transcripts in the context of lytic reactivation. Plays an essential role in cell cycle regulation in vascular smooth muscle cells by interacting with and regulating FANCA (Fanconi anemia complementation group A) mRNA. This Mus musculus (Mouse) protein is ATP-dependent RNA helicase DDX24 (Ddx24).